Here is a 358-residue protein sequence, read N- to C-terminus: 4-diphosphocytidyl-2-C-methyl-D-erythritol kinase (358 aa).

Lys24 is an active-site residue. 138-148 (PVAGGMAGGSA) provides a ligand contact to ATP. Residue Asp186 is part of the active site.

This sequence belongs to the GHMP kinase family. IspE subfamily.

The enzyme catalyses 4-CDP-2-C-methyl-D-erythritol + ATP = 4-CDP-2-C-methyl-D-erythritol 2-phosphate + ADP + H(+). It functions in the pathway isoprenoid biosynthesis; isopentenyl diphosphate biosynthesis via DXP pathway; isopentenyl diphosphate from 1-deoxy-D-xylulose 5-phosphate: step 3/6. Its function is as follows. Catalyzes the phosphorylation of the position 2 hydroxy group of 4-diphosphocytidyl-2C-methyl-D-erythritol. The chain is 4-diphosphocytidyl-2-C-methyl-D-erythritol kinase from Corynebacterium jeikeium (strain K411).